Consider the following 223-residue polypeptide: Deoxyribose-phosphate aldolase (223 aa).

Aspartate 91 functions as the Proton donor/acceptor in the catalytic mechanism. Lysine 153 functions as the Schiff-base intermediate with acetaldehyde in the catalytic mechanism. The Proton donor/acceptor role is filled by lysine 183.

It belongs to the DeoC/FbaB aldolase family. DeoC type 1 subfamily.

The protein resides in the cytoplasm. It catalyses the reaction 2-deoxy-D-ribose 5-phosphate = D-glyceraldehyde 3-phosphate + acetaldehyde. The protein operates within carbohydrate degradation; 2-deoxy-D-ribose 1-phosphate degradation; D-glyceraldehyde 3-phosphate and acetaldehyde from 2-deoxy-alpha-D-ribose 1-phosphate: step 2/2. In terms of biological role, catalyzes a reversible aldol reaction between acetaldehyde and D-glyceraldehyde 3-phosphate to generate 2-deoxy-D-ribose 5-phosphate. This is Deoxyribose-phosphate aldolase from Mycoplasmopsis synoviae (strain 53) (Mycoplasma synoviae).